The primary structure comprises 84 residues: uncharacterized protein (84 aa).

Belongs to the chlamydial CPn_0711/CT_665/TC_0036 family.

This is an uncharacterized protein from Chlamydia muridarum (strain MoPn / Nigg).